The following is a 364-amino-acid chain: MNRATATINVTALKHNLSQIKALAPKSLAWAMIKSNGYGHGLVRVAKALSDANAFGVACIDEALTLREVGIKSPIIVMKGFYNEAELSQFARHRLGAVIHCSDQVSLLKKTNLTSSLSVWLKIDTGMNRLGFSVEQSPAVYNQLKTSSSIQKPIGLMTHLADADNENKTFTELQIKRFFSVTEKMIGPKSIVNSAGFFAYPNALVDWIRPGIILYGISPFGINYNSFKEKIEKKFRPVMTLSAKIIAIKNRRKNDSVGYGCTWSCPEDMPIAIVSIGYGDGYPRHAPSGTPVLLNGKICPLIGRVSMDMIAIDLRSQPNAQVGDDVILWGEGLPVEIIAEKAGTIAYELLCKITQRVQFIEIEK.

Residue Lys-34 is the Proton acceptor; specific for D-alanine of the active site. The residue at position 34 (Lys-34) is an N6-(pyridoxal phosphate)lysine. Arg-129 serves as a coordination point for substrate. Residue Tyr-259 is the Proton acceptor; specific for L-alanine of the active site. Met-307 is a binding site for substrate.

The protein belongs to the alanine racemase family. The cofactor is pyridoxal 5'-phosphate.

It carries out the reaction L-alanine = D-alanine. The protein operates within amino-acid biosynthesis; D-alanine biosynthesis; D-alanine from L-alanine: step 1/1. In terms of biological role, catalyzes the interconversion of L-alanine and D-alanine. May also act on other amino acids. The polypeptide is Alanine racemase (alr) (Coxiella burnetii (strain CbuG_Q212) (Coxiella burnetii (strain Q212))).